Reading from the N-terminus, the 557-residue chain is Mercuric reductase (557 aa).

Residues M1 to K65 form the HMA domain. A metal cation is bound by residues C11 and C14. Positions 106 and 126 each coordinate FAD. A disulfide bond links C133 and C138. The FAD site is built by K142, A207, D399, and V407. Hg(2+)-binding residues include C554 and C555.

This sequence belongs to the class-I pyridine nucleotide-disulfide oxidoreductase family. In terms of assembly, homodimer. It depends on FAD as a cofactor.

The catalysed reaction is Hg + NADP(+) + H(+) = Hg(2+) + NADPH. Its function is as follows. Resistance to Hg(2+) in bacteria appears to be governed by a specialized system which includes mercuric reductase. MerA protein is responsible for volatilizing mercury as Hg(0). In Shewanella putrefaciens (Pseudomonas putrefaciens), this protein is Mercuric reductase (merA).